A 275-amino-acid chain; its full sequence is Large ribosomal subunit protein uL2c (275 aa).

2 disordered regions span residues 32-53 (SLSK…TCRH) and 218-242 (PTVR…APIG).

Belongs to the universal ribosomal protein uL2 family. Part of the 50S ribosomal subunit.

It localises to the plastid. The protein localises to the chloroplast. This Tetradesmus obliquus (Green alga) protein is Large ribosomal subunit protein uL2c (rpl2).